A 232-amino-acid chain; its full sequence is Orotidine 5'-phosphate decarboxylase (232 aa).

Residues Asp13, Lys35, 62–71 (DLKFHDIPNT), Thr122, Arg182, Gln191, Gly211, and Arg212 each bind substrate. Catalysis depends on Lys64, which acts as the Proton donor.

This sequence belongs to the OMP decarboxylase family. Type 1 subfamily. Homodimer.

The catalysed reaction is orotidine 5'-phosphate + H(+) = UMP + CO2. It participates in pyrimidine metabolism; UMP biosynthesis via de novo pathway; UMP from orotate: step 2/2. Functionally, catalyzes the decarboxylation of orotidine 5'-monophosphate (OMP) to uridine 5'-monophosphate (UMP). The sequence is that of Orotidine 5'-phosphate decarboxylase from Pseudomonas fluorescens (strain SBW25).